The following is a 204-amino-acid chain: dITP/XTP pyrophosphatase (204 aa).

Position 8–13 (8–13 (SNNAKK)) interacts with substrate. Mg(2+)-binding residues include Glu43 and Asp72. Asp72 serves as the catalytic Proton acceptor. Residues Ser73, 155 to 158 (FGYD), Lys180, and 185 to 186 (HR) each bind substrate.

The protein belongs to the HAM1 NTPase family. In terms of assembly, homodimer. Mg(2+) is required as a cofactor.

The enzyme catalyses XTP + H2O = XMP + diphosphate + H(+). The catalysed reaction is dITP + H2O = dIMP + diphosphate + H(+). It carries out the reaction ITP + H2O = IMP + diphosphate + H(+). In terms of biological role, pyrophosphatase that catalyzes the hydrolysis of nucleoside triphosphates to their monophosphate derivatives, with a high preference for the non-canonical purine nucleotides XTP (xanthosine triphosphate), dITP (deoxyinosine triphosphate) and ITP. Seems to function as a house-cleaning enzyme that removes non-canonical purine nucleotides from the nucleotide pool, thus preventing their incorporation into DNA/RNA and avoiding chromosomal lesions. In Cutibacterium acnes (strain DSM 16379 / KPA171202) (Propionibacterium acnes), this protein is dITP/XTP pyrophosphatase.